The primary structure comprises 588 residues: Peptidoglycan D,D-transpeptidase FtsI (588 aa).

A helical transmembrane segment spans residues 19–39 (FISWRFALLCGCILLALAFLL). Ser-307 serves as the catalytic Acyl-ester intermediate. The propeptide occupies 578-588 (INQGEGTGGRS).

It belongs to the transpeptidase family. FtsI subfamily.

The protein localises to the cell inner membrane. It catalyses the reaction Preferential cleavage: (Ac)2-L-Lys-D-Ala-|-D-Ala. Also transpeptidation of peptidyl-alanyl moieties that are N-acyl substituents of D-alanine.. Its pathway is cell wall biogenesis; peptidoglycan biosynthesis. Functionally, catalyzes cross-linking of the peptidoglycan cell wall at the division septum. In Escherichia coli O157:H7, this protein is Peptidoglycan D,D-transpeptidase FtsI.